The following is a 1017-amino-acid chain: DNA replication licensing factor MCM6 (1017 aa).

Disordered stretches follow at residues methionine 1–serine 94 and serine 200–glutamate 257. The span at serine 24–glycine 34 shows a compositional bias: low complexity. Residues leucine 35–methionine 83 show a composition bias toward polar residues. Residue serine 78 is modified to Phosphoserine. Residues aspartate 209–methionine 223 show a composition bias toward acidic residues. Residues asparagine 224–glutamate 257 show a composition bias toward polar residues. 2 positions are modified to phosphoserine: serine 249 and serine 372. One can recognise an MCM domain in the interval isoleucine 525–valine 732. Residue glycine 575–serine 582 coordinates ATP. An Arginine finger motif is present at residues serine 707–aspartate 710. Threonine 766 is modified (phosphothreonine). Residues isoleucine 852–lysine 901 are disordered.

Belongs to the MCM family. Component of the MCM2-7 complex. The complex forms a toroidal hexameric ring with the proposed subunit order MCM2-MCM6-MCM4-MCM7-MCM3-MCM5; loaded onto DNA, forms a head-head double hexamer. Interacts with MCM10.

It localises to the nucleus. It carries out the reaction ATP + H2O = ADP + phosphate + H(+). Its function is as follows. Acts as a component of the MCM2-7 complex (MCM complex) which is the putative replicative helicase essential for 'once per cell cycle' DNA replication initiation and elongation in eukaryotic cells. The active ATPase sites in the MCM2-7 ring are formed through the interaction surfaces of two neighboring subunits such that a critical structure of a conserved arginine finger motif is provided in trans relative to the ATP-binding site of the Walker A box of the adjacent subunit. The six ATPase active sites, however, are likely to contribute differentially to the complex helicase activity. Once loaded onto DNA, double hexamers can slide on dsDNA in the absence of ATPase activity. Required for the entry in S phase and for cell division. This is DNA replication licensing factor MCM6 (MCM6) from Saccharomyces cerevisiae (strain ATCC 204508 / S288c) (Baker's yeast).